The following is a 231-amino-acid chain: Enolase-phosphatase E1 (231 aa).

It belongs to the HAD-like hydrolase superfamily. MasA/MtnC family. Monomer. Requires Mg(2+) as cofactor.

The enzyme catalyses 5-methylsulfanyl-2,3-dioxopentyl phosphate + H2O = 1,2-dihydroxy-5-(methylsulfanyl)pent-1-en-3-one + phosphate. It participates in amino-acid biosynthesis; L-methionine biosynthesis via salvage pathway; L-methionine from S-methyl-5-thio-alpha-D-ribose 1-phosphate: step 3/6. It functions in the pathway amino-acid biosynthesis; L-methionine biosynthesis via salvage pathway; L-methionine from S-methyl-5-thio-alpha-D-ribose 1-phosphate: step 4/6. Functionally, bifunctional enzyme that catalyzes the enolization of 2,3-diketo-5-methylthiopentyl-1-phosphate (DK-MTP-1-P) into the intermediate 2-hydroxy-3-keto-5-methylthiopentenyl-1-phosphate (HK-MTPenyl-1-P), which is then dephosphorylated to form the acireductone 1,2-dihydroxy-3-keto-5-methylthiopentene (DHK-MTPene). The polypeptide is Enolase-phosphatase E1 (Granulibacter bethesdensis (strain ATCC BAA-1260 / CGDNIH1)).